The primary structure comprises 238 residues: Pyridoxine 5'-phosphate synthase (238 aa).

Positions 7 and 18 each coordinate 3-amino-2-oxopropyl phosphate. H43 functions as the Proton acceptor in the catalytic mechanism. R45 and H50 together coordinate 1-deoxy-D-xylulose 5-phosphate. The Proton acceptor role is filled by E70. T100 serves as a coordination point for 1-deoxy-D-xylulose 5-phosphate. H190 acts as the Proton donor in catalysis. 3-amino-2-oxopropyl phosphate is bound by residues D191 and 213–214; that span reads GH.

Belongs to the PNP synthase family. Homooctamer; tetramer of dimers.

The protein resides in the cytoplasm. The enzyme catalyses 3-amino-2-oxopropyl phosphate + 1-deoxy-D-xylulose 5-phosphate = pyridoxine 5'-phosphate + phosphate + 2 H2O + H(+). The protein operates within cofactor biosynthesis; pyridoxine 5'-phosphate biosynthesis; pyridoxine 5'-phosphate from D-erythrose 4-phosphate: step 5/5. Functionally, catalyzes the complicated ring closure reaction between the two acyclic compounds 1-deoxy-D-xylulose-5-phosphate (DXP) and 3-amino-2-oxopropyl phosphate (1-amino-acetone-3-phosphate or AAP) to form pyridoxine 5'-phosphate (PNP) and inorganic phosphate. This is Pyridoxine 5'-phosphate synthase from Parabacteroides distasonis (strain ATCC 8503 / DSM 20701 / CIP 104284 / JCM 5825 / NCTC 11152).